Here is a 392-residue protein sequence, read N- to C-terminus: uncharacterized protein (392 aa).

The protein belongs to the ROK (NagC/XylR) family.

This is an uncharacterized protein from Sinorhizobium fredii (strain NBRC 101917 / NGR234).